Reading from the N-terminus, the 361-residue chain is UDP-N-acetylglucosamine--N-acetylmuramyl-(pentapeptide) pyrophosphoryl-undecaprenol N-acetylglucosamine transferase (361 aa).

Residues 12–14 (TGG), Asn-123, Arg-166, Ser-192, and Gln-293 each bind UDP-N-acetyl-alpha-D-glucosamine.

Belongs to the glycosyltransferase 28 family. MurG subfamily.

Its subcellular location is the cell inner membrane. The catalysed reaction is di-trans,octa-cis-undecaprenyl diphospho-N-acetyl-alpha-D-muramoyl-L-alanyl-D-glutamyl-meso-2,6-diaminopimeloyl-D-alanyl-D-alanine + UDP-N-acetyl-alpha-D-glucosamine = di-trans,octa-cis-undecaprenyl diphospho-[N-acetyl-alpha-D-glucosaminyl-(1-&gt;4)]-N-acetyl-alpha-D-muramoyl-L-alanyl-D-glutamyl-meso-2,6-diaminopimeloyl-D-alanyl-D-alanine + UDP + H(+). It functions in the pathway cell wall biogenesis; peptidoglycan biosynthesis. Its function is as follows. Cell wall formation. Catalyzes the transfer of a GlcNAc subunit on undecaprenyl-pyrophosphoryl-MurNAc-pentapeptide (lipid intermediate I) to form undecaprenyl-pyrophosphoryl-MurNAc-(pentapeptide)GlcNAc (lipid intermediate II). This chain is UDP-N-acetylglucosamine--N-acetylmuramyl-(pentapeptide) pyrophosphoryl-undecaprenol N-acetylglucosamine transferase, found in Caulobacter vibrioides (strain ATCC 19089 / CIP 103742 / CB 15) (Caulobacter crescentus).